Here is a 909-residue protein sequence, read N- to C-terminus: DNA mismatch repair protein MutS (909 aa).

Basic and acidic residues predominate over residues 275–290 (QKAERPPLSRPEREEQ). Residues 275–295 (QKAERPPLSRPEREEQGSTLF) are disordered. ATP is bound at residue 661-668 (GPNMGGKS).

The protein belongs to the DNA mismatch repair MutS family.

This protein is involved in the repair of mismatches in DNA. It is possible that it carries out the mismatch recognition step. This protein has a weak ATPase activity. The chain is DNA mismatch repair protein MutS from Mesorhizobium japonicum (strain LMG 29417 / CECT 9101 / MAFF 303099) (Mesorhizobium loti (strain MAFF 303099)).